Consider the following 361-residue polypeptide: Allatostatin-A receptor (361 aa).

At 1–46 (MESTEDEFYTICLNLTAEDPSFGNCNYTTDFENGELLEKVVSRVVP) the chain is on the extracellular side. Asn14 and Asn26 each carry an N-linked (GlcNAc...) asparagine glycan. The chain crosses the membrane as a helical span at residues 47–67 (IFFGFIGIVGLVGNALVVLVV). The Cytoplasmic segment spans residues 68-78 (AANPGMRSTTN). The chain crosses the membrane as a helical span at residues 79-99 (LLIINLAVADLLFVIFCVPFT). The Extracellular segment spans residues 100–116 (ATDYVMPRWPFGDWWCK). Cys115 and Cys196 are disulfide-bonded. Residues 117–137 (VVQYFIVVTAHASVYTLVLMS) form a helical membrane-spanning segment. Residues 138 to 158 (LDRFMAVVHPIASMSIRTEKN) are Cytoplasmic-facing. The chain crosses the membrane as a helical span at residues 159 to 179 (ALLAIACIWVVILTTAIPVGI). The Extracellular segment spans residues 180 to 212 (CHGEREYSYFNRNHSSCVFLEERGYSKLGFQMS). Asn192 is a glycosylation site (N-linked (GlcNAc...) asparagine). Residues 213–233 (FFLSSYVIPLALISVLYMCML) traverse the membrane as a helical segment. The Cytoplasmic segment spans residues 234–259 (TRLWKSAPGGRVSAESRRGRKKVTRM). The helical transmembrane segment at 260–280 (VVVVVVVFAVCWCPIQIILLV) threads the bilayer. Residues 281–296 (KALNKYHITYFTVTAQ) are Extracellular-facing. Residues 297 to 317 (IVSHVLAYMNSCVNPVLYAFL) traverse the membrane as a helical segment. Topologically, residues 318–361 (SENFRVAFRKVMYCPPPYNDGFSGRPQATKTTRTGNGNSCHDIV) are cytoplasmic. A disordered region spans residues 341-361 (GRPQATKTTRTGNGNSCHDIV). Residues 343–361 (PQATKTTRTGNGNSCHDIV) show a composition bias toward polar residues.

The protein belongs to the G-protein coupled receptor 1 family. In terms of tissue distribution, expressed in the midgut and, to a lesser extent, in the fore- and hindgut of fifth instar larvae. Also highly expressed in the brain of fourth and fifth instar larvae.

It localises to the cell membrane. Functionally, acts as a receptor for A-type allatostatin neuropeptide hormones. This chain is Allatostatin-A receptor, found in Bombyx mori (Silk moth).